The primary structure comprises 180 residues: UPF0227 protein Ent638_1623 (180 aa).

Belongs to the UPF0227 family.

This Enterobacter sp. (strain 638) protein is UPF0227 protein Ent638_1623.